A 198-amino-acid polypeptide reads, in one-letter code: Recombination protein RecR (198 aa).

A C4-type zinc finger spans residues 57-72; it reads CSVCGRLTDDDPCIIC. Residues 80–175 enclose the Toprim domain; it reads TKILVVEDSK…KVTRLARGLA (96 aa).

It belongs to the RecR family.

Functionally, may play a role in DNA repair. It seems to be involved in an RecBC-independent recombinational process of DNA repair. It may act with RecF and RecO. The protein is Recombination protein RecR of Streptococcus thermophilus (strain CNRZ 1066).